The primary structure comprises 301 residues: Ribosomal protein L11 methyltransferase (301 aa).

S-adenosyl-L-methionine-binding residues include T152, G173, D195, and N236.

The protein belongs to the methyltransferase superfamily. PrmA family.

Its subcellular location is the cytoplasm. The enzyme catalyses L-lysyl-[protein] + 3 S-adenosyl-L-methionine = N(6),N(6),N(6)-trimethyl-L-lysyl-[protein] + 3 S-adenosyl-L-homocysteine + 3 H(+). In terms of biological role, methylates ribosomal protein L11. The sequence is that of Ribosomal protein L11 methyltransferase from Dictyoglomus thermophilum (strain ATCC 35947 / DSM 3960 / H-6-12).